A 1351-amino-acid chain; its full sequence is MPKIFLIKNRLHQQQQRLLESQNLLQHKNQDDERLVPPLSPSGSGSGPSPTPTSQPPPEPQGQGQQVLGQVPDSDQQPLSLTRKRFHHRRHYFGQSRHSLDHLNQNQSPNPNANANPNQIQNPAELEVECATGQVQNENFAAELLQRLTPNTATTAQNNIVNNLVNNSRAATSVLATKDCTIENSPISIPKNQRAEDEEEQEDQEKEKPAEREREKSDERTEQVEKEERVEREEEEDDEVDVGVEAPRPRFYNTGVVLTQAQRKEYPQEPKDLSLTIAKSSPASPHIHSDSESDSDSDGGCKLIVDEKPPLPVIKPLSLRLRSTPPPADQRPSPPPPRDPAPAVRCSVIQRAPQSQLPTSRAGFLLPPLDQLGPEQQEPIDYHVPKRRSPSYDSDEELNARRLERARQVREARRRSTILAARVLLAQSQRLNPRLVRSLPGILAAAAGHGRNSSSSSGAAGQGFQSSGFGSQNSGSGSSSGNQNAGSGAGSPGSGAGGGGGMGGGRDGRGNYGPNSPPTGALPPFYESLKSGQQSTASNNTGQSPGANHSHFNANPANFLQNAAAAAYIMSAGSGGGGCTGNGGGGASGPGGGPSANSGGGGGGGGGNGYINCGGVGGPNNSLDGNNLLNFASVSNYNESNSKFHNHHHHHQHNNNNNNNGGQTSMMGHPFYGGNPSAYGIILKDEPDIEYDEAKIDIGTFAQNIIQATMGSSGQFNASAYEDAIMSDLASSGQCPNGAVDPLQFTATLMLSSQTDHLLEQLSDAVDLSSFLQRSCVDDEESTSPRQDFELVSTPSLTPDSVTPVEQHNTNTTQLDVLHENLLTQLTHNIVRGGSNQQQQHHQQHGVQQQQQQQHSVQQQQQHNVQQQHGVQQQHVQQQPPPSYQHATRGLMMQQQPQHGGYQQQAAIMSQQQQQLLSQQQQQSHHQQQQQQQHAAAYQQHNIYAQQQQQQQQQHHQQQQQQQHHHFHHQQQQQPQPQSHHSHHHGHGHDNSNMSLPSPTAAAAAAAAAAAAAAAAAAHLQRPMSSSSSSGGTNSSNSSGGSSNSPLLDANAAAAAAAALLDTKPLIQSLGLPPDLQLEFVNGGHGIKNPLAVENAHGGHHRIRNIDCIDDLSKHGHHSQHQQQQGSPQQQNMQQSVQQQSVQQQQSLQQQQQQQHHQHHSNSSASSNASSHGSAEALCMGSSGGANEDSSSGNNKFVCRVCMKTFSLQRLLNRHMKCHSDIKRYLCTFCGKGFNDTFDLKRHTRTHTGVRPYKCNLCEKSFTQRCSLESHCQKVHSVQHQYAYKERRAKMYVCEECGHTTCEPEVHYLHLKNNHPFSPALLKFYDKRHFKFTNSQFANNLLGQLPMPVHN.

The tract at residues 1-31 (MPKIFLIKNRLHQQQQRLLESQNLLQHKNQD) is required for Ubr3 binding and tal-dependent proteolytic processing. 10 disordered regions span residues 22-77 (QNLL…SDQQ), 100-119 (LDHLNQNQSPNPNANANPNQ), 184-397 (NSPI…SDEE), 447-554 (AGHG…HFNA), 640-665 (SNSKFHNHHHHHQHNNNNNNNGGQTS), 778-807 (DDEESTSPRQDFELVSTPSLTPDSVTPVEQ), 834-887 (GSNQ…YQHA), 916-1000 (LLSQ…PSPT), 1023-1044 (PMSSSSSSGGTNSSNSSGGSSN), and 1113-1192 (SKHG…DSSS). Residues 49 to 60 (SPTPTSQPPPEP) show a composition bias toward pro residues. 2 stretches are compositionally biased toward low complexity: residues 61-72 (QGQGQQVLGQVP) and 104-119 (NQNQSPNPNANANPNQ). Basic and acidic residues predominate over residues 205–232 (EKEKPAEREREKSDERTEQVEKEERVER). The segment covering 233–242 (EEEEDDEVDV) has biased composition (acidic residues). A compositionally biased stretch (basic and acidic residues) spans 262–272 (QRKEYPQEPKD). The span at 324–340 (TPPPADQRPSPPPPRDP) shows a compositional bias: pro residues. Positions 447–486 (AGHGRNSSSSSGAAGQGFQSSGFGSQNSGSGSSSGNQNAG) are enriched in low complexity. Positions 487-505 (SGAGSPGSGAGGGGGMGGG) are enriched in gly residues. Polar residues predominate over residues 530–552 (KSGQQSTASNNTGQSPGANHSHF). Over residues 644–653 (FHNHHHHHQH) the composition is skewed to basic residues. The span at 793-807 (STPSLTPDSVTPVEQ) shows a compositional bias: polar residues. Low complexity-rich tracts occupy residues 835–878 (SNQQ…HVQQ), 916–962 (LLSQ…QQQQ), 970–979 (QQQQQPQPQS), 1025–1044 (SSSSSSGGTNSSNSSGGSSN), and 1121–1175 (HQQQ…HGSA). 4 C2H2-type zinc fingers span residues 1197–1219 (FVCRVCMKTFSLQRLLNRHMKCH), 1225–1247 (YLCTFCGKGFNDTFDLKRHTRTH), 1253–1276 (YKCNLCEKSFTQRCSLESHCQKVH), and 1292–1315 (YVCEECGHTTCEPEVHYLHLKNNH).

As to quaternary structure, interacts (via N-terminus) with Ubr3; the interaction is mediated by tal. Post-translationally, N-terminus is proteolytically cleaved and ubiquitinated via a tal-dependent mechanism, leading to the proteolytic degradation of the N-terminus and the production of transcriptional activator shavenbaby, a truncated form with transcriptional activator activity.

It localises to the cytoplasm. It is found in the nucleus. The protein resides in the nucleoplasm. Transcriptional regulator with essential functions in the germline and soma. Plays an essential role in regulating the formation of apical cell extensions such as denticles and aristae, and initiating cytoskeletal remodeling during epidermal differentiation. Functionally, transcriptional repressor which functions in postembryonic development. The full-length unprocessed form acts as a transcriptional repressor (Transcriptional repressor svb). Its function is as follows. Transcriptional activator which initiates trichome development and also promotes tarsal joint development. Has an essential somatic role regulating the tal-dependent formation of trichomes, and initiating cytoskeletal remodeling during epidermal differentiation. Function with SoxN is required for correct denticle morphogenesis on the embryonic epidermis. SoxN and svb appear to act both independently and in conjunction with each other to activate certain genes involved in denticle morphogenesis; Svb appears to be involved in regulating denticle length whereas SoxN regulates the denticle base circumference. Also functions in the development of other apical cell extensions such as bristles. Also has an important role in tarsal joint development, repressing expression of the N ligand Dl and defining its signaling boundary. In terms of biological role, transcriptional repressor which is specifically involved in female germline development, where it functions antagonistically to isoform D. Negatively regulates expression of otu and may also have autoregulatory activity. Negatively regulates expression of piwi in the primordial germ cells (PGCs). Transcriptional activator which is specifically involved in female germline development, where it functions antagonistically to isoform C. Necessary and sufficient for normal oogenesis. Required in the primordial germ cells (PGCs) for normal development of male and female germline cells. Plays a role in germline sex determination. Binds the promoter DNA and positively regulates the transcription of the otu gene in a stage-specific manner. May have autoregulatory activity. The chain is Transcriptional regulator ovo from Drosophila melanogaster (Fruit fly).